A 282-amino-acid chain; its full sequence is Trihydroxynaphthalene reductase (282 aa).

NADP(+) contacts are provided by I41, N114, and R147. Catalysis depends on proton donor residues S164 and Y178. 4 residues coordinate NADP(+): Y178, K182, I211, and T213. K182 acts as the Lowers pKa of active site Tyr in catalysis.

It belongs to the short-chain dehydrogenases/reductases (SDR) family. Homotetramer.

It functions in the pathway pigment biosynthesis; melanin biosynthesis. Catalyzes the NADPH-dependent reduction of 1,3,8-trihydroxynaphthalene (T3HN) into (-)-vermelone. Essential for appressorial penetration of colletotrichum lagenarium. This Colletotrichum orbiculare (strain 104-T / ATCC 96160 / CBS 514.97 / LARS 414 / MAFF 240422) (Cucumber anthracnose fungus) protein is Trihydroxynaphthalene reductase (THR1).